The primary structure comprises 943 residues: WD repeat-containing protein 3 (943 aa).

WD repeat units follow at residues 21 to 60 (SQKGNIVFVTLRGEKGRYVAVPACEHVFIWDLRKGEKILI), 63 to 102 (GLKQEVTCLCPSPDGLHLAVGYEDGSIRIFSLLSGEGNVT), 105 to 144 (GHKAAITTLKYDQLGGRLASGSKDTDIIVWDVINESGLYR), 147 to 186 (GHKDAITQALFLREKNLLVTSGKDTMVKWWDLDTQHCFKT), and 189 to 228 (GHRTEVWGLVLLSEEKRLITGASDSELRVWDIAYLQEIED). Phosphoserine is present on residues S240 and S241. The residue at position 257 (T257) is a Phosphothreonine. The stretch at 277–316 (EGRDRVVNLAVDKTGRILACHGTDSVLELFCILSKKEIQK) is one WD 6 repeat. Positions 326 to 345 (RKKAKLHSSKGEEEDPEVNV) are disordered. WD repeat units lie at residues 413-451 (GHRSDVRTLSFSSDNIAVLSAAADSIKIWNRSTLQCIRT), 453-493 (TCEY…ETID), 494-533 (AHDGALWSMSLSPDQRGFVTGGADKSVKFWDFELVKDENS), 547-586 (QLDEDVLCVSYSPNQKLLAVSLLDCTVKIFYVDTLKFFLS), 589-630 (GHKL…KSLF), 631-670 (AHDDSVMYLQFVPKSHLFFTAGKDHKIKQWDADKFEHIQT), and 673-712 (GHHQEIWCLAVSPSGDYVVSSSHDKSLRLWERTREPLILE). Glycyl lysine isopeptide (Lys-Gly) (interchain with G-Cter in SUMO2) cross-links involve residues K474 and K529. S726 is modified (phosphoserine).

This sequence belongs to the WD repeat WDR3/UTP12 family. As to quaternary structure, part of the small subunit (SSU) processome, composed of more than 70 proteins and the RNA chaperone small nucleolar RNA (snoRNA) U3. In terms of tissue distribution, ubiquitous.

The protein localises to the nucleus. Its subcellular location is the nucleolus. Its function is as follows. Part of the small subunit (SSU) processome, first precursor of the small eukaryotic ribosomal subunit. During the assembly of the SSU processome in the nucleolus, many ribosome biogenesis factors, an RNA chaperone and ribosomal proteins associate with the nascent pre-rRNA and work in concert to generate RNA folding, modifications, rearrangements and cleavage as well as targeted degradation of pre-ribosomal RNA by the RNA exosome. This is WD repeat-containing protein 3 from Homo sapiens (Human).